Here is a 249-residue protein sequence, read N- to C-terminus: Small ribosomal subunit protein eS6 (249 aa).

Basic and acidic residues predominate over residues Arg-216–Ala-229. Residues Arg-216–Lys-249 are disordered. Phosphoserine occurs at positions 235, 236, 240, 244, and 247. The segment covering Ser-236 to Lys-249 has biased composition (low complexity).

Belongs to the eukaryotic ribosomal protein eS6 family. Component of the small ribosomal subunit. Post-translationally, ribosomal protein S6 is the major substrate of protein kinases in eukaryote ribosomes. The phosphorylation is stimulated by growth factors, tumor promoting agents, and mitogens. It is dephosphorylated at growth arrest.

The protein localises to the cytoplasm. Component of the 40S small ribosomal subunit. Plays an important role in controlling cell growth and proliferation through the selective translation of particular classes of mRNA. This is Small ribosomal subunit protein eS6 (rps6) from Oncorhynchus mykiss (Rainbow trout).